Reading from the N-terminus, the 246-residue chain is Large ribosomal subunit protein uL3 (246 aa).

The tract at residues 140–162 is disordered; the sequence is SHRSIGSTGGRQDPGKTFKNKKM. Position 151 is an N5-methylglutamine (Q151).

Belongs to the universal ribosomal protein uL3 family. In terms of assembly, part of the 50S ribosomal subunit. Forms a cluster with proteins L14 and L19. Methylated by PrmB.

Its function is as follows. One of the primary rRNA binding proteins, it binds directly near the 3'-end of the 23S rRNA, where it nucleates assembly of the 50S subunit. This is Large ribosomal subunit protein uL3 from Methylobacterium sp. (strain 4-46).